Reading from the N-terminus, the 641-residue chain is DNA mismatch repair protein MutL (641 aa).

The segment at 345–445 (PAAVAPPAPA…GDTSLGDTSP (101 aa)) is disordered. Basic and acidic residues predominate over residues 419-429 (PRTEPATRTGE). The span at 432-442 (GISSGDTSLGD) shows a compositional bias: polar residues.

Belongs to the DNA mismatch repair MutL/HexB family.

Its function is as follows. This protein is involved in the repair of mismatches in DNA. It is required for dam-dependent methyl-directed DNA mismatch repair. May act as a 'molecular matchmaker', a protein that promotes the formation of a stable complex between two or more DNA-binding proteins in an ATP-dependent manner without itself being part of a final effector complex. The chain is DNA mismatch repair protein MutL from Azotobacter vinelandii (strain DJ / ATCC BAA-1303).